The chain runs to 68 residues: Conotoxin PnMLKM-011 (68 aa).

The signal sequence occupies residues 1-17 (MGVVLFIFLVLFPLATL). A propeptide spanning residues 18–51 (QLDPDQPVERYAENKQLLNPDERRGIILHALGQR) is cleaved from the precursor. 3 cysteine pairs are disulfide-bonded: Cys-53–Cys-65, Cys-54–Cys-63, and Cys-59–Cys-66. Leu-67 is modified (leucine amide).

The protein belongs to the conotoxin M superfamily. In terms of tissue distribution, expressed by the venom duct.

Its subcellular location is the secreted. The sequence is that of Conotoxin PnMLKM-011 from Conus pennaceus (Feathered cone).